A 332-amino-acid chain; its full sequence is L-lactate dehydrogenase A chain (332 aa).

An N-acetylalanine modification is found at A2. K5 carries the post-translational modification N6-acetyllysine; alternate. K5 is modified (N6-succinyllysine; alternate). K14 bears the N6-acetyllysine mark. 29–57 is an NAD(+) binding site; sequence GAVGMACAISILMKELADEIALVDVMEDK. K57 bears the N6-acetyllysine; alternate mark. Residue K57 forms a Glycyl lysine isopeptide (Lys-Gly) (interchain with G-Cter in SUMO2); alternate linkage. K81 is subject to N6-acetyllysine. Residue R99 coordinates NAD(+). Residue R106 participates in substrate binding. The residue at position 118 (K118) is an N6-acetyllysine; alternate. K118 is modified (N6-succinyllysine; alternate). An N6-acetyllysine modification is found at K126. N138 lines the NAD(+) pocket. Residues N138 and R169 each contribute to the substrate site. The Proton acceptor role is filled by H193. An N6-acetyllysine mark is found at K224 and K232. Y239 carries the post-translational modification Phosphotyrosine. At K243 the chain carries N6-acetyllysine. T248 provides a ligand contact to substrate. Position 309 is a phosphothreonine (T309). N6-acetyllysine; alternate is present on K318. The residue at position 318 (K318) is an N6-succinyllysine; alternate. T322 is subject to Phosphothreonine.

It belongs to the LDH/MDH superfamily. LDH family. As to quaternary structure, homotetramer. Interacts with PTEN upstream reading frame protein MP31. In terms of processing, ISGylated.

Its subcellular location is the cytoplasm. The catalysed reaction is (S)-lactate + NAD(+) = pyruvate + NADH + H(+). It functions in the pathway fermentation; pyruvate fermentation to lactate; (S)-lactate from pyruvate: step 1/1. Interconverts simultaneously and stereospecifically pyruvate and lactate with concomitant interconversion of NADH and NAD(+). The sequence is that of L-lactate dehydrogenase A chain (LDHA) from Sus scrofa (Pig).